Consider the following 332-residue polypeptide: Holliday junction branch migration complex subunit RuvB (332 aa).

Positions 1–181 (MSRILDNEQM…FGITGHMEYY (181 aa)) are large ATPase domain (RuvB-L). Residues Leu20, Arg21, Gly62, Lys65, Thr66, Thr67, 128–130 (EDF), Arg171, Tyr181, and Arg218 contribute to the ATP site. Thr66 serves as a coordination point for Mg(2+). Residues 182 to 252 (EEADLTEIVE…ITDQALSMLD (71 aa)) are small ATPAse domain (RuvB-S). Residues 255-332 (HEGLDYVDQK…EHLGYEYMEK (78 aa)) are head domain (RuvB-H). Residues Arg291, Arg310, Arg312, and Arg315 each contribute to the DNA site.

Belongs to the RuvB family. Homohexamer. Forms an RuvA(8)-RuvB(12)-Holliday junction (HJ) complex. HJ DNA is sandwiched between 2 RuvA tetramers; dsDNA enters through RuvA and exits via RuvB. An RuvB hexamer assembles on each DNA strand where it exits the tetramer. Each RuvB hexamer is contacted by two RuvA subunits (via domain III) on 2 adjacent RuvB subunits; this complex drives branch migration. In the full resolvosome a probable DNA-RuvA(4)-RuvB(12)-RuvC(2) complex forms which resolves the HJ.

The protein resides in the cytoplasm. It carries out the reaction ATP + H2O = ADP + phosphate + H(+). In terms of biological role, the RuvA-RuvB-RuvC complex processes Holliday junction (HJ) DNA during genetic recombination and DNA repair, while the RuvA-RuvB complex plays an important role in the rescue of blocked DNA replication forks via replication fork reversal (RFR). RuvA specifically binds to HJ cruciform DNA, conferring on it an open structure. The RuvB hexamer acts as an ATP-dependent pump, pulling dsDNA into and through the RuvAB complex. RuvB forms 2 homohexamers on either side of HJ DNA bound by 1 or 2 RuvA tetramers; 4 subunits per hexamer contact DNA at a time. Coordinated motions by a converter formed by DNA-disengaged RuvB subunits stimulates ATP hydrolysis and nucleotide exchange. Immobilization of the converter enables RuvB to convert the ATP-contained energy into a lever motion, pulling 2 nucleotides of DNA out of the RuvA tetramer per ATP hydrolyzed, thus driving DNA branch migration. The RuvB motors rotate together with the DNA substrate, which together with the progressing nucleotide cycle form the mechanistic basis for DNA recombination by continuous HJ branch migration. Branch migration allows RuvC to scan DNA until it finds its consensus sequence, where it cleaves and resolves cruciform DNA. The chain is Holliday junction branch migration complex subunit RuvB from Streptococcus gordonii (strain Challis / ATCC 35105 / BCRC 15272 / CH1 / DL1 / V288).